Reading from the N-terminus, the 298-residue chain is Thymidylate synthase (298 aa).

DUMP-binding positions include arginine 25 and 159–160; that span reads RR. The active-site Nucleophile is the cysteine 179. DUMP is bound by residues 200–203, asparagine 211, and 241–243; these read RSVD and HLY. Position 203 (aspartate 203) interacts with (6R)-5,10-methylene-5,6,7,8-tetrahydrofolate. Position 297 (alanine 297) interacts with (6R)-5,10-methylene-5,6,7,8-tetrahydrofolate.

It belongs to the thymidylate synthase family. Bacterial-type ThyA subfamily. In terms of assembly, homodimer.

Its subcellular location is the cytoplasm. It carries out the reaction dUMP + (6R)-5,10-methylene-5,6,7,8-tetrahydrofolate = 7,8-dihydrofolate + dTMP. It functions in the pathway pyrimidine metabolism; dTTP biosynthesis. Its function is as follows. Catalyzes the reductive methylation of 2'-deoxyuridine-5'-monophosphate (dUMP) to 2'-deoxythymidine-5'-monophosphate (dTMP) while utilizing 5,10-methylenetetrahydrofolate (mTHF) as the methyl donor and reductant in the reaction, yielding dihydrofolate (DHF) as a by-product. This enzymatic reaction provides an intracellular de novo source of dTMP, an essential precursor for DNA biosynthesis. The sequence is that of Thymidylate synthase from Cereibacter sphaeroides (strain ATCC 17029 / ATH 2.4.9) (Rhodobacter sphaeroides).